The primary structure comprises 212 residues: Thymidylate kinase (212 aa).

10-17 (GIDGCGKT) serves as a coordination point for ATP.

This sequence belongs to the thymidylate kinase family.

The enzyme catalyses dTMP + ATP = dTDP + ADP. Phosphorylation of dTMP to form dTDP in both de novo and salvage pathways of dTTP synthesis. The sequence is that of Thymidylate kinase from Prochlorococcus marinus (strain MIT 9312).